The following is a 446-amino-acid chain: MRECLSIHIGQAGIQIGDACWELYCLEHGIQPNGVVLDTQQDQLENAKMEHTNASFDTFFCETRAGKHVPRALFVDLEPTVIDGIRTGQHRSLFHPEQLLSGKEDAANNYARGRYSVGSEVIDLVLERTRKLAEQCGGLQGFLIFRSFGGGTGSGFTSLLMERLTGEYSRKTKLEFSVYPAPRISTAVVEPYNSVLTTHSTTEHTDCTFMVDNEAVYDICHRKLGVECPSHASINRLVVQVVSSITASLRFEGPLNVDLIEFQTNLVPYPRIHFPMTAFAPIVSADKAYHEQFSVSDITTACFESSNQLVKCDPRLGKYMACCLLYRGDVVPKEVNAAIAATKSRHSVQFVDWCPTGFKVGINNRPPTVMPGGDLAKVHRSICMLSNTTAIVEAWARLDHKFDLMYAKRAFLHWYLREGMEEAEFLEAREDLAALERDYEEVAQSF.

The short motif at 1 to 4 (MREC) is the MREC motif element. Positions 11, 78, 147, 151, 152, 186, 213, and 235 each coordinate GTP. E78 is a binding site for Mg(2+). Residue E261 is part of the active site.

Belongs to the tubulin family. Dimer of alpha and beta chains. A typical microtubule is a hollow water-filled tube with an outer diameter of 25 nm and an inner diameter of 15 nM. Alpha-beta heterodimers associate head-to-tail to form protofilaments running lengthwise along the microtubule wall with the beta-tubulin subunit facing the microtubule plus end conferring a structural polarity. Microtubules usually have 13 protofilaments but different protofilament numbers can be found in some organisms and specialized cells. The cofactor is Mg(2+). Post-translationally, some glutamate residues at the C-terminus are polyglutamylated, resulting in polyglutamate chains on the gamma-carboxyl group. Polyglutamylation plays a key role in microtubule severing by spastin (SPAST). SPAST preferentially recognizes and acts on microtubules decorated with short polyglutamate tails: severing activity by SPAST increases as the number of glutamates per tubulin rises from one to eight, but decreases beyond this glutamylation threshold. Glutamylation is also involved in cilia motility. In terms of processing, some glutamate residues at the C-terminus are monoglycylated but not polyglycylated due to the absence of functional TTLL10 in human. Monoglycylation is mainly limited to tubulin incorporated into cilia and flagella axonemes, which is required for their stability and maintenance. Flagella glycylation controls sperm motility. Both polyglutamylation and monoglycylation can coexist on the same protein on adjacent residues, and lowering glycylation levels increases polyglutamylation, and reciprocally.

The protein resides in the cytoplasm. It is found in the cytoskeleton. The catalysed reaction is GTP + H2O = GDP + phosphate + H(+). Its function is as follows. Tubulin is the major constituent of microtubules, a cylinder consisting of laterally associated linear protofilaments composed of alpha- and beta-tubulin heterodimers. Microtubules grow by the addition of GTP-tubulin dimers to the microtubule end, where a stabilizing cap forms. Below the cap, tubulin dimers are in GDP-bound state, owing to GTPase activity of alpha-tubulin. This Homo sapiens (Human) protein is Tubulin alpha chain-like 3 (TUBAL3).